The following is an 86-amino-acid chain: Putative regulatory protein Desal_2819 (86 aa).

Belongs to the RemA family.

This chain is Putative regulatory protein Desal_2819, found in Maridesulfovibrio salexigens (strain ATCC 14822 / DSM 2638 / NCIMB 8403 / VKM B-1763) (Desulfovibrio salexigens).